We begin with the raw amino-acid sequence, 95 residues long: MTLNVDEEVERLKEEIKRLAQPRPDGSYVVKFGVLFSDDRCANIFEALVGTLRAAKKRKVVTYDGELLLQGVHDNVEIVLLKPPTQATQAEGVGA.

This sequence belongs to the costars family.

The sequence is that of Costars family protein WS02710_H03 from Picea sitchensis (Sitka spruce).